A 443-amino-acid polypeptide reads, in one-letter code: Ribosomal protein uS12 methylthiotransferase RimO (443 aa).

The MTTase N-terminal domain maps to 9-119; that stretch reads PKIGMVSLGC…VVSAVHDAAP (111 aa). The [4Fe-4S] cluster site is built by C18, C54, C83, C150, C154, and C157. Positions 136-373 constitute a Radical SAM core domain; it reads LTPRHYSYLK…MEKAAQISEA (238 aa). One can recognise a TRAM domain in the interval 376-443; the sequence is QAKIGRDIAT…EHDLFGVALS (68 aa).

This sequence belongs to the methylthiotransferase family. RimO subfamily. Requires [4Fe-4S] cluster as cofactor.

The protein localises to the cytoplasm. The enzyme catalyses L-aspartate(89)-[ribosomal protein uS12]-hydrogen + (sulfur carrier)-SH + AH2 + 2 S-adenosyl-L-methionine = 3-methylsulfanyl-L-aspartate(89)-[ribosomal protein uS12]-hydrogen + (sulfur carrier)-H + 5'-deoxyadenosine + L-methionine + A + S-adenosyl-L-homocysteine + 2 H(+). In terms of biological role, catalyzes the methylthiolation of an aspartic acid residue of ribosomal protein uS12. This Zymomonas mobilis subsp. mobilis (strain ATCC 31821 / ZM4 / CP4) protein is Ribosomal protein uS12 methylthiotransferase RimO.